Here is a 475-residue protein sequence, read N- to C-terminus: Putative response regulator NtrX-like (475 aa).

The Response regulatory domain occupies Asp-5 to Cys-121. At Asp-54 the chain carries 4-aspartylphosphate. A Sigma-54 factor interaction domain is found at Leu-143–Ile-369. Residues Gly-171–Glu-178 and Ala-232–Glu-241 contribute to the ATP site.

Its function is as follows. Member of the two-component regulatory system RF_0895/RF_0427. The polypeptide is Putative response regulator NtrX-like (Rickettsia felis (strain ATCC VR-1525 / URRWXCal2) (Rickettsia azadi)).